The chain runs to 373 residues: Ferroptosis suppressor protein 1 (373 aa).

The N-myristoyl glycine moiety is linked to residue G2. The helical transmembrane segment at V7–A27 threads the bilayer. 6-hydroxy-FAD contacts are provided by residues G18–G22, R54, and V82. K168 bears the N6-acetyllysine; by KAT2B mark. D285 lines the 6-hydroxy-FAD pocket.

This sequence belongs to the FAD-dependent oxidoreductase family. In terms of assembly, interacts with importin subunits KPNA2 and IPO5; this interaction likely mediates the translocation into the nucleus upon oxidative stress. 6-hydroxy-FAD serves as cofactor. In terms of processing, N-myristoylation at Gly-2 mediates the recruitment to lipid droplets and plasma membrane, enabling its anti-lipid peroxidation activity. Acetylation at Lys-168 prevents AIFM2 ubiquitination and degradation, thereby inhibiting ferroptosis. KAT2B mediates acetylation at Lys-168, while HDAC3 removes it. Post-translationally, ubiquitinated. AIFM2 undergoes 'Lys-29'-ubiquitination and proteasomal degradation, which is inhibited by acetylation at Lys-168. In terms of tissue distribution, detected in most normal tissues as two transcripts of 1.8 and 4.0 kb in length, respectively. Highly expressed in heart, moderately in liver and skeletal muscles, and expressed at low levels in placenta, lung, kidney, and pancreas. Both transcripts expressed following p53/TP53 induction. The shorter 1.8 kb transcript seems to be the major transcript in EB1 colon cancer cells.

The protein resides in the lipid droplet. Its subcellular location is the cell membrane. It localises to the cytoplasm. It is found in the mitochondrion membrane. The protein localises to the nucleus. The enzyme catalyses ubiquinone-10 + NADH + H(+) = ubiquinol-10 + NAD(+). The catalysed reaction is phylloquinone + NADH + H(+) = phylloquinol + NAD(+). It catalyses the reaction menaquinone-4 + NADH + H(+) = menaquinol-4 + NAD(+). It carries out the reaction menadione + NADH + H(+) = menadiol + NAD(+). The modification by 4-hydroxy-2-nonenal (HNE) adduction in mitochondria results in loss of the oxidoreductase activity and activation of a novel function in mitochondrial oxidative stress signaling. In terms of biological role, a NAD(P)H-dependent oxidoreductase that acts as a key inhibitor of ferroptosis. At the plasma membrane, catalyzes reduction of coenzyme Q/ubiquinone-10 to ubiquinol-10, a lipophilic radical-trapping antioxidant that prevents lipid oxidative damage and consequently ferroptosis. Acts in parallel to GPX4 to suppress phospholipid peroxidation and ferroptosis. This anti-ferroptotic function is independent of cellular glutathione levels. Also acts as a potent radical-trapping antioxidant by mediating warfarin-resistant vitamin K reduction in the canonical vitamin K cycle: catalyzes NAD(P)H-dependent reduction of vitamin K (phylloquinone, menaquinone-4 and menadione) to hydroquinone forms. Hydroquinones act as potent radical-trapping antioxidants inhibitor of phospholipid peroxidation and ferroptosis. May play a role in mitochondrial stress signaling. Upon oxidative stress, associates with the lipid peroxidation end product 4-hydroxy-2-nonenal (HNE) forming a lipid adduct devoid of oxidoreductase activity, which then translocates from mitochondria into the nucleus triggering DNA damage and cell death. Capable of DNA binding in a non-sequence specific way. The chain is Ferroptosis suppressor protein 1 from Homo sapiens (Human).